The sequence spans 307 residues: Dimethyladenosine transferase (307 aa).

6 residues coordinate S-adenosyl-L-methionine: H31, L33, G58, E79, D107, and N122.

This sequence belongs to the class I-like SAM-binding methyltransferase superfamily. rRNA adenine N(6)-methyltransferase family.

It carries out the reaction adenosine(1779)/adenosine(1780) in 18S rRNA + 4 S-adenosyl-L-methionine = N(6)-dimethyladenosine(1779)/N(6)-dimethyladenosine(1780) in 18S rRNA + 4 S-adenosyl-L-homocysteine + 4 H(+). Its function is as follows. Specifically dimethylates two adjacent adenosines in the loop of a conserved hairpin near the 3'-end of 18S rRNA in the 40S particle. The sequence is that of Dimethyladenosine transferase (dim1) from Schizosaccharomyces pombe (strain 972 / ATCC 24843) (Fission yeast).